Consider the following 743-residue polypeptide: Catalase-peroxidase (743 aa).

Positions 1–15 (MSSDSRPPQPDTSTQ) are enriched in polar residues. Residues 1 to 40 (MSSDSRPPQPDTSTQSNSESESPAISSPTPQDHAPMTNRD) are disordered. Residues 16 to 28 (SNSESESPAISSP) are compositionally biased toward low complexity. Residues 110-233 (WHAAGTYRIQ…YGATTMGLIY (124 aa)) constitute a cross-link (tryptophyl-tyrosyl-methioninium (Trp-Tyr) (with M-259)). The active-site Proton acceptor is His-111. A cross-link (tryptophyl-tyrosyl-methioninium (Tyr-Met) (with W-110)) is located at residues 233 to 259 (YVNPEGPEGKPDPVAAAHDIRETFARM). His-274 contacts heme b. Residues 490-511 (DKRGGANGGRLRLEPQKSWESN) form a disordered region.

Belongs to the peroxidase family. Peroxidase/catalase subfamily. In terms of assembly, homodimer or homotetramer. Requires heme b as cofactor. In terms of processing, formation of the three residue Trp-Tyr-Met cross-link is important for the catalase, but not the peroxidase activity of the enzyme.

It carries out the reaction H2O2 + AH2 = A + 2 H2O. The catalysed reaction is 2 H2O2 = O2 + 2 H2O. Bifunctional enzyme with both catalase and broad-spectrum peroxidase activity. This is Catalase-peroxidase from Mycobacterium ulcerans (strain Agy99).